Here is a 162-residue protein sequence, read N- to C-terminus: 2-C-methyl-D-erythritol 2,4-cyclodiphosphate synthase (162 aa).

2 residues coordinate a divalent metal cation: D9 and H11. Residues 9–11 (DFH) and 37–38 (HS) contribute to the 4-CDP-2-C-methyl-D-erythritol 2-phosphate site. Residue H45 participates in a divalent metal cation binding. 4-CDP-2-C-methyl-D-erythritol 2-phosphate is bound by residues 59 to 61 (DIG), 64 to 68 (FPDTD), 135 to 138 (TTSE), and R145.

Belongs to the IspF family. Homotrimer. It depends on a divalent metal cation as a cofactor.

The catalysed reaction is 4-CDP-2-C-methyl-D-erythritol 2-phosphate = 2-C-methyl-D-erythritol 2,4-cyclic diphosphate + CMP. It functions in the pathway isoprenoid biosynthesis; isopentenyl diphosphate biosynthesis via DXP pathway; isopentenyl diphosphate from 1-deoxy-D-xylulose 5-phosphate: step 4/6. Its function is as follows. Involved in the biosynthesis of isopentenyl diphosphate (IPP) and dimethylallyl diphosphate (DMAPP), two major building blocks of isoprenoid compounds. Catalyzes the conversion of 4-diphosphocytidyl-2-C-methyl-D-erythritol 2-phosphate (CDP-ME2P) to 2-C-methyl-D-erythritol 2,4-cyclodiphosphate (ME-CPP) with a corresponding release of cytidine 5-monophosphate (CMP). This Leptospira biflexa serovar Patoc (strain Patoc 1 / Ames) protein is 2-C-methyl-D-erythritol 2,4-cyclodiphosphate synthase.